A 360-amino-acid chain; its full sequence is Phosphoserine aminotransferase (360 aa).

Arg41 provides a ligand contact to L-glutamate. Pyridoxal 5'-phosphate contacts are provided by residues 75 to 76 (AS), Trp101, Thr151, Asp171, and Gln194. The residue at position 195 (Lys195) is an N6-(pyridoxal phosphate)lysine. 236-237 (NT) contributes to the pyridoxal 5'-phosphate binding site.

Belongs to the class-V pyridoxal-phosphate-dependent aminotransferase family. SerC subfamily. As to quaternary structure, homodimer. It depends on pyridoxal 5'-phosphate as a cofactor.

It localises to the cytoplasm. It carries out the reaction O-phospho-L-serine + 2-oxoglutarate = 3-phosphooxypyruvate + L-glutamate. It catalyses the reaction 4-(phosphooxy)-L-threonine + 2-oxoglutarate = (R)-3-hydroxy-2-oxo-4-phosphooxybutanoate + L-glutamate. The protein operates within amino-acid biosynthesis; L-serine biosynthesis; L-serine from 3-phospho-D-glycerate: step 2/3. It participates in cofactor biosynthesis; pyridoxine 5'-phosphate biosynthesis; pyridoxine 5'-phosphate from D-erythrose 4-phosphate: step 3/5. Its function is as follows. Catalyzes the reversible conversion of 3-phosphohydroxypyruvate to phosphoserine and of 3-hydroxy-2-oxo-4-phosphonooxybutanoate to phosphohydroxythreonine. This Herpetosiphon aurantiacus (strain ATCC 23779 / DSM 785 / 114-95) protein is Phosphoserine aminotransferase.